Reading from the N-terminus, the 776-residue chain is DNA ligase (776 aa).

NAD(+) is bound by residues 31–35 (DAEYD) and 80–81 (SL). Lys-114 acts as the N6-AMP-lysine intermediate in catalysis. NAD(+) is bound by residues Arg-135, Glu-172, Lys-288, and Lys-312. Zn(2+) contacts are provided by Cys-406, Cys-409, Cys-436, and Cys-442. The BRCT domain occupies 693–776 (AEGLPLAGQT…TFLAEQGIVV (84 aa)).

Belongs to the NAD-dependent DNA ligase family. LigA subfamily. The cofactor is Mg(2+). It depends on Mn(2+) as a cofactor.

The catalysed reaction is NAD(+) + (deoxyribonucleotide)n-3'-hydroxyl + 5'-phospho-(deoxyribonucleotide)m = (deoxyribonucleotide)n+m + AMP + beta-nicotinamide D-nucleotide.. DNA ligase that catalyzes the formation of phosphodiester linkages between 5'-phosphoryl and 3'-hydroxyl groups in double-stranded DNA using NAD as a coenzyme and as the energy source for the reaction. It is essential for DNA replication and repair of damaged DNA. The polypeptide is DNA ligase (Pseudomonas putida (strain GB-1)).